Consider the following 847-residue polypeptide: Mitogen-activated protein kinase kinase kinase 11 (847 aa).

Ser-11 is subject to Phosphoserine. Residues 11 to 38 are disordered; sequence SPLGSWNGSGSGGGGGGGGGRPEGSPKA. The span at 17-32 shows a compositional bias: gly residues; it reads NGSGSGGGGGGGGGRP. A Phosphoserine modification is found at Ser-35. The region spanning 41 to 105 is the SH3 domain; it reads YANPVWTALF…PSNYVSRGGG (65 aa). In terms of domain architecture, Protein kinase spans 117–379; the sequence is LRLEEVIGIG…ASILQQLEAL (263 aa). ATP-binding positions include 123–131 and Lys-144; that span reads IGIGGFGKV. Asp-241 (proton acceptor) is an active-site residue. At Thr-277 the chain carries Phosphothreonine; by autocatalysis. Ser-281 bears the Phosphoserine; by autocatalysis and MAP4K1 mark. Ser-394 is modified (phosphoserine). 2 leucine-zipper regions span residues 403–424 and 438–459; these read IQGLFDELRAKEKELLSREEEL and LRRREHLLAQWELEVFERELTL. Phosphoserine is present on residues Ser-507, Ser-524, Ser-548, Ser-555, and Ser-556. A disordered region spans residues 537 to 643; it reads PAEPGQAWGR…SSGTPKLIQR (107 aa). Residues 550 to 562 show a composition bias toward basic and acidic residues; the sequence is RRLEDSSNGERRA. Positions 597-609 are enriched in low complexity; sequence SSPLGSPSTPPAL. A phosphoserine mark is found at Ser-654, Ser-693, and Ser-705. The tract at residues 655–847 is disordered; the sequence is LGLGRDLQPP…QAPWVPEAGP (193 aa). Over residues 676–694 the composition is skewed to pro residues; it reads TTPPTPTPAPCPTEPPPSP. The residue at position 708 (Thr-708) is a Phosphothreonine. 9 positions are modified to phosphoserine: Ser-724, Ser-727, Ser-740, Ser-748, Ser-758, Ser-770, Ser-789, Ser-793, and Ser-815. Over residues 760-773 the composition is skewed to low complexity; the sequence is PLGLISRPRPSPLR. The span at 787–799 shows a compositional bias: pro residues; the sequence is RPSPLPSPQPAPR. Residues 800-816 show a composition bias toward low complexity; the sequence is RAPWTLFPDSDPFWDSP.

This sequence belongs to the protein kinase superfamily. STE Ser/Thr protein kinase family. MAP kinase kinase kinase subfamily. In terms of assembly, homodimer; undergoes dimerization during activation. Interacts with MAP2K4/MKK4. Interacts with MAP2K7/MKK7. Found in a complex with SH3RF1, RAC1, MAP2K7/MKK7, MAPK8IP1/JIP1 and MAPK8/JNK1. Mg(2+) is required as a cofactor. Autophosphorylation on serine and threonine residues within the activation loop plays a role in enzyme activation. Thr-277 is likely to be the main autophosphorylation site. Phosphorylation of Ser-555 and Ser-556 is induced by CDC42. As to expression, expressed in a wide variety of normal and neoplastic tissues including fetal lung, liver, heart and kidney, and adult lung, liver, heart, kidney, placenta, skeletal muscle, pancreas and brain.

It localises to the cytoplasm. The protein localises to the cytoskeleton. Its subcellular location is the microtubule organizing center. It is found in the centrosome. It catalyses the reaction L-seryl-[protein] + ATP = O-phospho-L-seryl-[protein] + ADP + H(+). It carries out the reaction L-threonyl-[protein] + ATP = O-phospho-L-threonyl-[protein] + ADP + H(+). Homodimerization via the leucine zipper domains is required for autophosphorylation and subsequent activation. Functionally, activates the JUN N-terminal pathway. Required for serum-stimulated cell proliferation and for mitogen and cytokine activation of MAPK14 (p38), MAPK3 (ERK) and MAPK8 (JNK1) through phosphorylation and activation of MAP2K4/MKK4 and MAP2K7/MKK7. Plays a role in mitogen-stimulated phosphorylation and activation of BRAF, but does not phosphorylate BRAF directly. Influences microtubule organization during the cell cycle. This is Mitogen-activated protein kinase kinase kinase 11 from Homo sapiens (Human).